Consider the following 119-residue polypeptide: Large ribosomal subunit protein uL18 (119 aa).

This sequence belongs to the universal ribosomal protein uL18 family. As to quaternary structure, part of the 50S ribosomal subunit; part of the 5S rRNA/L5/L18/L25 subcomplex. Contacts the 5S and 23S rRNAs.

This is one of the proteins that bind and probably mediate the attachment of the 5S RNA into the large ribosomal subunit, where it forms part of the central protuberance. The protein is Large ribosomal subunit protein uL18 of Staphylococcus aureus (strain Mu3 / ATCC 700698).